Reading from the N-terminus, the 168-residue chain is DNA damage-inducible transcript 3 protein (168 aa).

Residues 10–18 (FGALSSWEL) are interaction with TRIB3. An N-terminal region spans residues 10–26 (FGALSSWELEAWYEDLQ). Phosphoserine; by CK2 occurs at positions 14, 15, 30, and 31. Residues 31–141 (SDENRGTCVS…QLAEENERLK (111 aa)) are disordered. Over residues 76–90 (SQSPCSPESSQSSLA) the composition is skewed to low complexity. Phosphoserine; by MAPK14 occurs at positions 78 and 81. The bZIP domain occupies 98–161 (QGRTRKRKQS…EATRRALIDR (64 aa)). The basic motif stretch occupies residues 100–129 (RTRKRKQSGQSPARAGKQRMKEKEQENERK). Residues 118–141 (RMKEKEQENERKVAQLAEENERLK) show a composition bias toward basic and acidic residues. Residues 133-147 (LAEENERLKQEIERL) form a leucine-zipper region.

Belongs to the bZIP family. As to quaternary structure, heterodimer. Interacts with TCF7L2/TCF4, EP300/P300, HDAC1, HDAC5 and HDAC6. Interacts with TRIB3 which blocks its association with EP300/P300. Interacts with FOXO3, CEBPB and ATF4. Post-translationally, ubiquitinated, leading to its degradation by the proteasome. In terms of processing, phosphorylation at serine residues by MAPK14 enhances its transcriptional activation activity while phosphorylation at serine residues by CK2 inhibits its transcriptional activation activity.

Its subcellular location is the cytoplasm. The protein localises to the nucleus. In terms of biological role, multifunctional transcription factor in ER stress response. Plays an essential role in the response to a wide variety of cell stresses and induces cell cycle arrest and apoptosis in response to ER stress. Plays a dual role both as an inhibitor of CCAAT/enhancer-binding protein (C/EBP) function and as an activator of other genes. Acts as a dominant-negative regulator of C/EBP-induced transcription: dimerizes with members of the C/EBP family, impairs their association with C/EBP binding sites in the promoter regions, and inhibits the expression of C/EBP regulated genes. Positively regulates the transcription of TRIB3, IL6, IL8, IL23, TNFRSF10B/DR5, PPP1R15A/GADD34, BBC3/PUMA, BCL2L11/BIM and ERO1L. Negatively regulates; expression of BCL2 and MYOD1, ATF4-dependent transcriptional activation of asparagine synthetase (ASNS), CEBPA-dependent transcriptional activation of hepcidin (HAMP) and CEBPB-mediated expression of peroxisome proliferator-activated receptor gamma (PPARG). Inhibits the canonical Wnt signaling pathway by binding to TCF7L2/TCF4, impairing its DNA-binding properties and repressing its transcriptional activity. Plays a regulatory role in the inflammatory response through the induction of caspase-11 (CASP4/CASP11) which induces the activation of caspase-1 (CASP1) and both these caspases increase the activation of pro-IL1B to mature IL1B which is involved in the inflammatory response. The protein is DNA damage-inducible transcript 3 protein (DDIT3) of Bos taurus (Bovine).